The following is a 143-amino-acid chain: Large-conductance mechanosensitive channel (143 aa).

2 helical membrane passes run 19 to 39 (VGVI…GDLI) and 81 to 101 (GSFL…FGVI).

It belongs to the MscL family. In terms of assembly, homopentamer.

The protein localises to the cell inner membrane. Functionally, channel that opens in response to stretch forces in the membrane lipid bilayer. May participate in the regulation of osmotic pressure changes within the cell. This chain is Large-conductance mechanosensitive channel, found in Rhodopseudomonas palustris (strain BisB5).